Here is a 221-residue protein sequence, read N- to C-terminus: Guanylate kinase (221 aa).

A Guanylate kinase-like domain is found at G20–Q198. A27–S34 provides a ligand contact to ATP.

It belongs to the guanylate kinase family.

The protein localises to the cytoplasm. The enzyme catalyses GMP + ATP = GDP + ADP. Its function is as follows. Essential for recycling GMP and indirectly, cGMP. This is Guanylate kinase from Ralstonia nicotianae (strain ATCC BAA-1114 / GMI1000) (Ralstonia solanacearum).